The following is a 465-amino-acid chain: Light-independent protochlorophyllide reductase subunit N (465 aa).

Residues Cys-23, Cys-48, and Cys-108 each contribute to the [4Fe-4S] cluster site.

Belongs to the BchN/ChlN family. As to quaternary structure, protochlorophyllide reductase is composed of three subunits; ChlL, ChlN and ChlB. Forms a heterotetramer of two ChlB and two ChlN subunits. Requires [4Fe-4S] cluster as cofactor.

The enzyme catalyses chlorophyllide a + oxidized 2[4Fe-4S]-[ferredoxin] + 2 ADP + 2 phosphate = protochlorophyllide a + reduced 2[4Fe-4S]-[ferredoxin] + 2 ATP + 2 H2O. It participates in porphyrin-containing compound metabolism; chlorophyll biosynthesis (light-independent). In terms of biological role, component of the dark-operative protochlorophyllide reductase (DPOR) that uses Mg-ATP and reduced ferredoxin to reduce ring D of protochlorophyllide (Pchlide) to form chlorophyllide a (Chlide). This reaction is light-independent. The NB-protein (ChlN-ChlB) is the catalytic component of the complex. The protein is Light-independent protochlorophyllide reductase subunit N of Trichodesmium erythraeum (strain IMS101).